A 338-amino-acid polypeptide reads, in one-letter code: MKLTFLGAGAWGTALASHAAATNDVVLWGRDPAQLGAIAATHENAAYLPGVKLSARLAVQADFELAVAHAADDPDGIVVVATPVAGLREMTRRLAARSARPVSMLWLCKGFEAGTHLLPHQMVRAELDAAGRTEGFAYGVLSGPSFAREVAQGLPCALTVAGTEPSLADRAQAAFHHHAMRIYGSDDLTGVEVGGAVKNVLAIATGASDGLGLGLNARAALVTRGLAEMTRLGLALGGRVETFMGLAGVGDLILTATGDLSRNRKVGQQLASGQSLEQVLAGLGHVAEGVRCAQAVAELAATHGIEMPIARAVCAVLFDGLSAADAVAQLLQRDARDE.

Positions 11, 30, and 109 each coordinate NADPH. 3 residues coordinate sn-glycerol 3-phosphate: lysine 109, glycine 143, and serine 145. Alanine 147 is an NADPH binding site. Positions 198, 251, 261, 262, and 263 each coordinate sn-glycerol 3-phosphate. Residue lysine 198 is the Proton acceptor of the active site. An NADPH-binding site is contributed by arginine 262. Residues valine 286 and glutamate 288 each contribute to the NADPH site.

The protein belongs to the NAD-dependent glycerol-3-phosphate dehydrogenase family.

The protein localises to the cytoplasm. The catalysed reaction is sn-glycerol 3-phosphate + NAD(+) = dihydroxyacetone phosphate + NADH + H(+). The enzyme catalyses sn-glycerol 3-phosphate + NADP(+) = dihydroxyacetone phosphate + NADPH + H(+). It participates in membrane lipid metabolism; glycerophospholipid metabolism. Functionally, catalyzes the reduction of the glycolytic intermediate dihydroxyacetone phosphate (DHAP) to sn-glycerol 3-phosphate (G3P), the key precursor for phospholipid synthesis. The chain is Glycerol-3-phosphate dehydrogenase [NAD(P)+] from Cupriavidus taiwanensis (strain DSM 17343 / BCRC 17206 / CCUG 44338 / CIP 107171 / LMG 19424 / R1) (Ralstonia taiwanensis (strain LMG 19424)).